A 167-amino-acid chain; its full sequence is Ubiquitin-fold modifier-conjugating enzyme 1 (167 aa).

Cysteine 116 acts as the Glycyl thioester intermediate in catalysis.

The protein belongs to the ubiquitin-conjugating enzyme family. UFC1 subfamily. As to quaternary structure, interacts with UBA5 (via C-terminus). Interacts with UFL1. Interacts with UFM1.

In terms of biological role, E2-like enzyme which specifically catalyzes the second step in ufmylation. Accepts the ubiquitin-like modifier UFM1 from the E1 enzyme UBA5 and forms an intermediate with UFM1 via a thioester linkage. Ufmylation is involved in various processes, such as ribosome recycling, response to DNA damage, interferon response or reticulophagy (also called ER-phagy). This chain is Ubiquitin-fold modifier-conjugating enzyme 1, found in Esox lucius (Northern pike).